The chain runs to 167 residues: uncharacterized protein (167 aa).

This is an uncharacterized protein from Acidianus convivator (ATV).